A 424-amino-acid chain; its full sequence is UDP-N-acetylglucosamine 1-carboxyvinyltransferase (424 aa).

22-23 (KN) is a phosphoenolpyruvate binding site. Arginine 93 is a binding site for UDP-N-acetyl-alpha-D-glucosamine. Catalysis depends on cysteine 117, which acts as the Proton donor. Cysteine 117 is subject to 2-(S-cysteinyl)pyruvic acid O-phosphothioketal. UDP-N-acetyl-alpha-D-glucosamine contacts are provided by residues 122 to 126 (RPIDL), aspartate 307, and isoleucine 329.

The protein belongs to the EPSP synthase family. MurA subfamily.

The protein resides in the cytoplasm. It catalyses the reaction phosphoenolpyruvate + UDP-N-acetyl-alpha-D-glucosamine = UDP-N-acetyl-3-O-(1-carboxyvinyl)-alpha-D-glucosamine + phosphate. The protein operates within cell wall biogenesis; peptidoglycan biosynthesis. Functionally, cell wall formation. Adds enolpyruvyl to UDP-N-acetylglucosamine. In Chlorobium phaeovibrioides (strain DSM 265 / 1930) (Prosthecochloris vibrioformis (strain DSM 265)), this protein is UDP-N-acetylglucosamine 1-carboxyvinyltransferase.